We begin with the raw amino-acid sequence, 324 residues long: Dolichyl-phosphate beta-glucosyltransferase (324 aa).

Over 1–7 (MAPLLLQ) the chain is Lumenal. A helical; Signal-anchor for type II membrane protein transmembrane segment spans residues 8-28 (LAVLGAALAAAALVLISIVAF). Topologically, residues 29-324 (TTATKMPALH…WRLEQTRKMN (296 aa)) are cytoplasmic.

This sequence belongs to the glycosyltransferase 2 family. Expressed in pancreas, placenta, liver, heart, brain, kidney, skeletal muscle, and lung.

The protein resides in the endoplasmic reticulum membrane. It carries out the reaction a di-trans,poly-cis-dolichyl phosphate + UDP-alpha-D-glucose = a di-trans,poly-cis-dolichyl beta-D-glucosyl phosphate + UDP. The protein operates within protein modification; protein glycosylation. Its function is as follows. Dolichyl-phosphate beta-glucosyltransferase that operates in the biosynthetic pathway of dolichol-linked oligosaccharides, the glycan precursors employed in protein asparagine (N)-glycosylation. The assembly of dolichol-linked oligosaccharides begins on the cytosolic side of the endoplasmic reticulum membrane and finishes in its lumen. The sequential addition of sugars to dolichol pyrophosphate produces dolichol-linked oligosaccharides containing fourteen sugars, including two GlcNAcs, nine mannoses and three glucoses. Once assembled, the oligosaccharide is transferred from the lipid to nascent proteins by oligosaccharyltransferases. Dolichyl-phosphate beta-glucosyltransferase produces dolichyl beta-D-glucosyl phosphate/Dol-P-Glc, the glucose donor substrate used sequentially by ALG6, ALG8 and ALG10 to add glucose residues on top of the Man(9)GlcNAc(2)-PP-Dol structure. These are the three last steps in the biosynthetic pathway of dolichol-linked oligosaccharides to produce Glc(3)Man(9)GlcNAc(2)-PP-Dol. The enzyme is most probably active on the cytoplasmic side of the endoplasmic reticulum while its product Dol-P-Glc is the substrate for ALG6, ALG8 and ALG11 in the lumen of the endoplasmic reticulum. This chain is Dolichyl-phosphate beta-glucosyltransferase, found in Homo sapiens (Human).